Reading from the N-terminus, the 170-residue chain is Small ribosomal subunit protein mS41 (170 aa).

A mitochondrion-targeting transit peptide spans 1–20; that stretch reads MFRTLLSSTVRSIQLKPVTS.

Belongs to the mitochondrion-specific ribosomal protein mS41 family. Component of the mitochondrial small ribosomal subunit (mt-SSU).

Its subcellular location is the mitochondrion. In terms of biological role, component of the mitochondrial ribosome (mitoribosome), a dedicated translation machinery responsible for the synthesis of mitochondrial genome-encoded proteins, including at least some of the essential transmembrane subunits of the mitochondrial respiratory chain. The mitoribosomes are attached to the mitochondrial inner membrane and translation products are cotranslationally integrated into the membrane. mS41 is involved in telomere length regulation. The chain is Small ribosomal subunit protein mS41 (FYV4) from Candida albicans (strain SC5314 / ATCC MYA-2876) (Yeast).